The primary structure comprises 462 residues: Fumarate hydratase class II (462 aa).

Substrate is bound by residues 97–99 (SGT), 128–131 (HPND), 138–140 (STN), and T186. The Proton donor/acceptor role is filled by H187. S317 is an active-site residue. Residues S318 and 323–325 (KVN) contribute to the substrate site.

The protein belongs to the class-II fumarase/aspartase family. Fumarase subfamily. As to quaternary structure, homotetramer.

The protein resides in the cytoplasm. The catalysed reaction is (S)-malate = fumarate + H2O. It functions in the pathway carbohydrate metabolism; tricarboxylic acid cycle; (S)-malate from fumarate: step 1/1. Involved in the TCA cycle. Catalyzes the stereospecific interconversion of fumarate to L-malate. This Neisseria meningitidis serogroup A / serotype 4A (strain DSM 15465 / Z2491) protein is Fumarate hydratase class II.